The primary structure comprises 1368 residues: DNA-directed RNA polymerase subunit beta (1368 aa).

Belongs to the RNA polymerase beta chain family. In terms of assembly, the RNAP catalytic core consists of 2 alpha, 1 beta, 1 beta' and 1 omega subunit. When a sigma factor is associated with the core the holoenzyme is formed, which can initiate transcription.

The enzyme catalyses RNA(n) + a ribonucleoside 5'-triphosphate = RNA(n+1) + diphosphate. Functionally, DNA-dependent RNA polymerase catalyzes the transcription of DNA into RNA using the four ribonucleoside triphosphates as substrates. The protein is DNA-directed RNA polymerase subunit beta of Burkholderia thailandensis (strain ATCC 700388 / DSM 13276 / CCUG 48851 / CIP 106301 / E264).